Here is a 718-residue protein sequence, read N- to C-terminus: Ribosome-releasing factor 2, mitochondrial (718 aa).

The N-terminal 29 residues, 1-29 (MLKCAWQNGPRQSNRWLWQLSNQIWKRSY), are a transit peptide targeting the mitochondrion. The 280-residue stretch at 31 to 310 (SKIRNIGILA…AVNSYLPAPE (280 aa)) folds into the tr-type G domain. Residues 40 to 47 (AHIDAGKT), 104 to 108 (DTPGH), and 158 to 161 (NKMD) contribute to the GTP site.

Belongs to the TRAFAC class translation factor GTPase superfamily. Classic translation factor GTPase family. EF-G/EF-2 subfamily.

The protein resides in the mitochondrion. Mitochondrial GTPase that mediates the disassembly of ribosomes from messenger RNA at the termination of mitochondrial protein biosynthesis. Not involved in the GTP-dependent ribosomal translocation step during translation elongation. The polypeptide is Ribosome-releasing factor 2, mitochondrial (Drosophila erecta (Fruit fly)).